We begin with the raw amino-acid sequence, 98 residues long: Co-chaperonin GroES (98 aa).

Belongs to the GroES chaperonin family. As to quaternary structure, heptamer of 7 subunits arranged in a ring. Interacts with the chaperonin GroEL.

The protein resides in the cytoplasm. In terms of biological role, together with the chaperonin GroEL, plays an essential role in assisting protein folding. The GroEL-GroES system forms a nano-cage that allows encapsulation of the non-native substrate proteins and provides a physical environment optimized to promote and accelerate protein folding. GroES binds to the apical surface of the GroEL ring, thereby capping the opening of the GroEL channel. This chain is Co-chaperonin GroES, found in Bartonella quintana (strain Toulouse) (Rochalimaea quintana).